A 265-amino-acid polypeptide reads, in one-letter code: HUWE1-associated protein modifying stress responses (265 aa).

4 disordered regions span residues 1-22 (MEDK…HWFS), 145-170 (RNSR…GSSV), 195-218 (VRSS…RRNG), and 240-265 (GTRK…NRMI). Composition is skewed to polar residues over residues 156 to 170 (VSPN…GSSV) and 195 to 212 (VRSS…SSNT).

This sequence belongs to the HAPSTR1 family. In terms of assembly, oligomer.

It is found in the nucleus. Its subcellular location is the cytoplasm. Its function is as follows. Acts as a central player within a network of stress response pathways promoting cellular adaptability. Functions as a negative regulator of TP53/P53 in the cellular response to telomere erosion and probably also DNA damage. The sequence is that of HUWE1-associated protein modifying stress responses from Xenopus tropicalis (Western clawed frog).